A 434-amino-acid polypeptide reads, in one-letter code: Histidinol dehydrogenase (434 aa).

Residues Tyr130, Gln192, and Asn215 each coordinate NAD(+). Substrate is bound by residues Ser238, Gln260, and His263. Residues Gln260 and His263 each contribute to the Zn(2+) site. Residues Glu328 and His329 each act as proton acceptor in the active site. Substrate contacts are provided by His329, Asp362, Glu416, and His421. Asp362 lines the Zn(2+) pocket. His421 is a Zn(2+) binding site.

Belongs to the histidinol dehydrogenase family. Zn(2+) serves as cofactor.

It catalyses the reaction L-histidinol + 2 NAD(+) + H2O = L-histidine + 2 NADH + 3 H(+). The protein operates within amino-acid biosynthesis; L-histidine biosynthesis; L-histidine from 5-phospho-alpha-D-ribose 1-diphosphate: step 9/9. Functionally, catalyzes the sequential NAD-dependent oxidations of L-histidinol to L-histidinaldehyde and then to L-histidine. The protein is Histidinol dehydrogenase of Synechococcus sp. (strain ATCC 27144 / PCC 6301 / SAUG 1402/1) (Anacystis nidulans).